The chain runs to 169 residues: Small ribosomal subunit protein uS5 (169 aa).

An S5 DRBM domain is found at 15–79 (LKDQVVAINR…ESAKKNLVKV (65 aa)).

This sequence belongs to the universal ribosomal protein uS5 family. In terms of assembly, part of the 30S ribosomal subunit. Contacts proteins S4 and S8.

In terms of biological role, with S4 and S12 plays an important role in translational accuracy. Its function is as follows. Located at the back of the 30S subunit body where it stabilizes the conformation of the head with respect to the body. The sequence is that of Small ribosomal subunit protein uS5 from Koribacter versatilis (strain Ellin345).